A 72-amino-acid chain; its full sequence is Large ribosomal subunit protein uL29 (72 aa).

Belongs to the universal ribosomal protein uL29 family.

The sequence is that of Large ribosomal subunit protein uL29 from Prochlorococcus marinus (strain MIT 9301).